We begin with the raw amino-acid sequence, 510 residues long: Bifunctional purine biosynthesis protein PurH (510 aa).

The MGS-like domain maps to 1 to 142; it reads MRALLSVSDK…KNYKDVMVLC (142 aa).

The protein belongs to the PurH family.

The enzyme catalyses (6R)-10-formyltetrahydrofolate + 5-amino-1-(5-phospho-beta-D-ribosyl)imidazole-4-carboxamide = 5-formamido-1-(5-phospho-D-ribosyl)imidazole-4-carboxamide + (6S)-5,6,7,8-tetrahydrofolate. The catalysed reaction is IMP + H2O = 5-formamido-1-(5-phospho-D-ribosyl)imidazole-4-carboxamide. The protein operates within purine metabolism; IMP biosynthesis via de novo pathway; 5-formamido-1-(5-phospho-D-ribosyl)imidazole-4-carboxamide from 5-amino-1-(5-phospho-D-ribosyl)imidazole-4-carboxamide (10-formyl THF route): step 1/1. It functions in the pathway purine metabolism; IMP biosynthesis via de novo pathway; IMP from 5-formamido-1-(5-phospho-D-ribosyl)imidazole-4-carboxamide: step 1/1. The protein is Bifunctional purine biosynthesis protein PurH of Campylobacter jejuni subsp. doylei (strain ATCC BAA-1458 / RM4099 / 269.97).